The chain runs to 171 residues: Protein hunchback (171 aa).

Disordered stretches follow at residues 14 to 93 and 124 to 171; these read PMSH…PMQI and SNDK…KYMA. Residues 17–31 are compositionally biased toward basic residues; the sequence is HHHHHSHHSHGHHHS. 2 stretches are compositionally biased toward low complexity: residues 32 to 42 and 52 to 80; these read NSNSNASSPRQ and SSSN…DTPL. The span at 152–171 shows a compositional bias: basic and acidic residues; sequence EPEKDHDLMSNSSEDMKYMA.

Belongs to the hunchback C2H2-type zinc-finger protein family.

It is found in the nucleus. Gap class segmentation protein that controls development of head structures. The sequence is that of Protein hunchback (hb) from Scaptomyza albovittata (Fruit fly).